We begin with the raw amino-acid sequence, 1556 residues long: uncharacterized protein (1556 aa).

This is an uncharacterized protein from Ictalurid herpesvirus 1 (strain Auburn) (IcHV-1).